We begin with the raw amino-acid sequence, 157 residues long: Ribosomal RNA large subunit methyltransferase H (157 aa).

Residues Leu73, Gly105, and 124–129 (LSRMTF) each bind S-adenosyl-L-methionine.

The protein belongs to the RNA methyltransferase RlmH family. As to quaternary structure, homodimer.

It is found in the cytoplasm. The catalysed reaction is pseudouridine(1915) in 23S rRNA + S-adenosyl-L-methionine = N(3)-methylpseudouridine(1915) in 23S rRNA + S-adenosyl-L-homocysteine + H(+). In terms of biological role, specifically methylates the pseudouridine at position 1915 (m3Psi1915) in 23S rRNA. This Porphyromonas gingivalis (strain ATCC 33277 / DSM 20709 / CIP 103683 / JCM 12257 / NCTC 11834 / 2561) protein is Ribosomal RNA large subunit methyltransferase H.